Consider the following 581-residue polypeptide: Ezrin (581 aa).

One can recognise an FERM domain in the interval 2 to 295 (PKPINVRVTT…GNHELYMRRR (294 aa)). Lysine 60 is subject to N6-acetyllysine. The [IL]-x-C-x-x-[DE] motif motif lies at 115 to 120 (IYCPPE). The residue at position 146 (tyrosine 146) is a Phosphotyrosine; by PDGFR. Residues 244–581 (EIRNISFNDK…KQRIDEFEAM (338 aa)) form an interaction with SCYL3 region. The stretch at 302-462 (VQQMKAQARE…QDDLVKTREE (161 aa)) forms a coiled coil. Positions 306–341 (KAQAREEKHQKQLERQQLETEKKRRETVEREKEQMM) are disordered. Over residues 308 to 341 (QAREEKHQKQLERQQLETEKKRRETVEREKEQMM) the composition is skewed to basic and acidic residues. Tyrosine 354 is subject to Phosphotyrosine; by PDGFR. Serine 366 bears the Phosphoserine mark. Phosphotyrosine is present on tyrosine 476. The tract at residues 534-560 (SQARDENKRTHNDIIHNENMRQGRDKY) is disordered. The span at 535 to 560 (QARDENKRTHNDIIHNENMRQGRDKY) shows a compositional bias: basic and acidic residues. At threonine 562 the chain carries Phosphothreonine; by ROCK2 and PKC/PRKCI.

In terms of assembly, interacts with PALS1 and NHERF2. Found in a complex with EZR, PODXL and NHERF2. Interacts with MCC, PLEKHG6, PODXL, SCYL3/PACE1, NHERF1 and TMEM8B. Interacts (when phosphorylated) with FES/FPS. Interacts with dimeric S100P, the interaction may be activating through unmasking of F-actin binding sites. Identified in complexes that contain VIM, EZR, AHNAK, BFSP1, BFSP2, ANK2, PLEC, PRX and spectrin. Detected in a complex composed of at least EZR, AHNAK, PPL and PRX. Interacts with PDPN (via cytoplasmic domain); activates RHOA and promotes epithelial-mesenchymal transition. Interacts with SPN/CD43 cytoplasmic tail, CD44 and ICAM2. Interacts with SLC9A3; interaction targets SLC9A3 to the apical membrane. Interacts with SLC9A1; regulates interactions of SLC9A1 with cytoskeletal and promotes stress fiber formation. Interacts with CLIC5; may work together in a complex which also includes RDX and MYO6 to stabilize linkages between the plasma membrane and subjacent actin cytoskeleton at the base of stereocilia. Post-translationally, phosphorylated by tyrosine-protein kinases. Phosphorylation by ROCK2 suppresses the head-to-tail association of the N-terminal and C-terminal halves resulting in an opened conformation which is capable of actin and membrane-binding. S-nitrosylation is induced by interferon-gamma and oxidatively-modified low-densitity lipoprotein (LDL(ox)) possibly implicating the iNOS-S100A8/9 transnitrosylase complex. As to expression, detected in eye lens fiber cells (at protein level).

It is found in the apical cell membrane. It localises to the cell projection. The protein resides in the microvillus membrane. Its subcellular location is the ruffle membrane. The protein localises to the cytoplasm. It is found in the cell cortex. It localises to the cytoskeleton. The protein resides in the microvillus. Its activity is regulated as follows. A head-to-tail association, of the N-terminal and C-terminal halves results in a closed conformation (inactive form) which is incapable of actin or membrane-binding. In terms of biological role, probably involved in connections of major cytoskeletal structures to the plasma membrane. In epithelial cells, required for the formation of microvilli and membrane ruffles on the apical pole. Along with PLEKHG6, required for normal macropinocytosis. This chain is Ezrin (EZR), found in Bos taurus (Bovine).